Here is a 197-residue protein sequence, read N- to C-terminus: Inner membrane-spanning protein YciB (197 aa).

The next 5 membrane-spanning stretches (helical) occupy residues 22–42 (IYSA…YHWF), 48–68 (PSMM…TLIF), 76–96 (WKPS…HLIG), 121–141 (AAWV…AYTF), and 144–164 (EIWV…FLIG).

This sequence belongs to the YciB family.

The protein resides in the cell inner membrane. Functionally, plays a role in cell envelope biogenesis, maintenance of cell envelope integrity and membrane homeostasis. The polypeptide is Inner membrane-spanning protein YciB (Magnetococcus marinus (strain ATCC BAA-1437 / JCM 17883 / MC-1)).